The sequence spans 336 residues: UPF0284 protein PYRAB00380 (336 aa).

It belongs to the UPF0284 family.

This is UPF0284 protein PYRAB00380 from Pyrococcus abyssi (strain GE5 / Orsay).